A 395-amino-acid polypeptide reads, in one-letter code: Elongation factor Tu (395 aa).

A tr-type G domain is found at 10-204 (KEHANIGTIG…AVDDYIPTPE (195 aa)). Positions 19-26 (GHVDHGKT) are G1. 19–26 (GHVDHGKT) contacts GTP. Position 26 (threonine 26) interacts with Mg(2+). The interval 60-64 (GITIN) is G2. The G3 stretch occupies residues 81–84 (DCPG). Residues 81–85 (DCPGH) and 136–139 (NKAD) contribute to the GTP site. The interval 136 to 139 (NKAD) is G4. Residues 174-176 (SAL) are G5.

It belongs to the TRAFAC class translation factor GTPase superfamily. Classic translation factor GTPase family. EF-Tu/EF-1A subfamily. Monomer.

It localises to the cytoplasm. It catalyses the reaction GTP + H2O = GDP + phosphate + H(+). In terms of biological role, GTP hydrolase that promotes the GTP-dependent binding of aminoacyl-tRNA to the A-site of ribosomes during protein biosynthesis. The polypeptide is Elongation factor Tu (Staphylococcus carnosus (strain TM300)).